Reading from the N-terminus, the 85-residue chain is Large ribosomal subunit protein bL27 (85 aa).

This sequence belongs to the bacterial ribosomal protein bL27 family.

This chain is Large ribosomal subunit protein bL27, found in Pseudomonas fluorescens (strain ATCC BAA-477 / NRRL B-23932 / Pf-5).